Here is a 121-residue protein sequence, read N- to C-terminus: Large ribosomal subunit protein uL14 (121 aa).

Belongs to the universal ribosomal protein uL14 family. In terms of assembly, part of the 50S ribosomal subunit. Forms a cluster with proteins L3 and L19. In the 70S ribosome, L14 and L19 interact and together make contacts with the 16S rRNA in bridges B5 and B8.

Its function is as follows. Binds to 23S rRNA. Forms part of two intersubunit bridges in the 70S ribosome. This chain is Large ribosomal subunit protein uL14, found in Hydrogenobaculum sp. (strain Y04AAS1).